The chain runs to 417 residues: XO lethal protein 1 (417 aa).

The disordered stretch occupies residues 373–417 (VSPGETSSEGISDEHHYEEYDEDDIMEEEEAPSARQDDTYDEDEE). Over residues 391 to 403 (EYDEDDIMEEEEA) the composition is skewed to acidic residues.

Belongs to the GHMP kinase family. Xol-1 subfamily.

It localises to the nucleus. In terms of biological role, sex-determining factor that is required for sexual differentiation and X chromosome dosage compensation to promote male development. High expression during gastrulation triggers male development, while low expression at that time triggers hermaphrodite development. Although related to GHMP kinase, its mode of action remains unclear. The chain is XO lethal protein 1 from Caenorhabditis elegans.